The primary structure comprises 883 residues: Bifunctional heparan sulfate N-deacetylase/N-sulfotransferase 2 (883 aa).

At 1 to 18 the chain is on the cytoplasmic side; that stretch reads MLQLWKVVRPARQLELHR. Residues 19–39 form a helical; Signal-anchor for type II membrane protein membrane-spanning segment; the sequence is LILLLIAFSLGSMGFLAYYVS. Over 40 to 883 the chain is Lumenal; the sequence is TSPKAKEPLP…REELQHSSLG (844 aa). The interval 41–597 is heparan sulfate N-deacetylase 2; sequence SPKAKEPLPL…KRHKDIWSKE (557 aa). The disordered stretch occupies residues 49-81; the sequence is PLPLGDCSSGGAAGPGPARPPVPPRPPRPPETA. Residues 65–78 are compositionally biased toward pro residues; that stretch reads PARPPVPPRPPRPP. 3 N-linked (GlcNAc...) asparagine glycosylation sites follow: asparagine 233, asparagine 350, and asparagine 400. The interval 598–883 is heparan sulfate N-sulfotransferase 2; sequence KTCDRLPKFL…REELQHSSLG (286 aa). Lysine 613 acts as the For sulfotransferase activity in catalysis. 613–617 lines the 3'-phosphoadenylyl sulfate pocket; that stretch reads KTGTT. Asparagine 666 is a glycosylation site (N-linked (GlcNAc...) asparagine). A 3'-phosphoadenylyl sulfate-binding site is contributed by serine 711. N-linked (GlcNAc...) asparagine glycans are attached at residues asparagine 726 and asparagine 802. An intrachain disulfide couples cysteine 817 to cysteine 827. 832–836 contacts 3'-phosphoadenylyl sulfate; the sequence is KGRRY.

Belongs to the sulfotransferase 1 family. NDST subfamily. In terms of assembly, monomer.

The protein resides in the golgi apparatus membrane. The catalysed reaction is alpha-D-glucosaminyl-[heparan sulfate](n) + 3'-phosphoadenylyl sulfate = N-sulfo-alpha-D-glucosaminyl-[heparan sulfate](n) + adenosine 3',5'-bisphosphate + 2 H(+). Its pathway is glycan metabolism; heparan sulfate biosynthesis. It functions in the pathway glycan metabolism; heparin biosynthesis. In terms of biological role, essential bifunctional enzyme that catalyzes both the N-deacetylation and the N-sulfation of glucosamine (GlcNAc) of the glycosaminoglycan in heparan sulfate. Modifies the GlcNAc-GlcA disaccharide repeating sugar backbone to make N-sulfated heparosan, a prerequisite substrate for later modifications in heparin biosynthesis. Plays a role in determining the extent and pattern of sulfation of heparan sulfate. Required for the exosomal release of SDCBP, CD63 and syndecan. This chain is Bifunctional heparan sulfate N-deacetylase/N-sulfotransferase 2 (NDST2), found in Homo sapiens (Human).